A 233-amino-acid chain; its full sequence is Glycerol-3-phosphate acyltransferase (233 aa).

A run of 5 helical transmembrane segments spans residues 7-27 (WIII…GYII), 94-114 (ISIV…YIGF), 127-147 (VIAI…IVAF), 153-173 (SIGS…GVLI), and 185-205 (ISYE…LLII).

This sequence belongs to the PlsY family. Probably interacts with PlsX.

It localises to the cell membrane. The catalysed reaction is an acyl phosphate + sn-glycerol 3-phosphate = a 1-acyl-sn-glycero-3-phosphate + phosphate. It participates in lipid metabolism; phospholipid metabolism. In terms of biological role, catalyzes the transfer of an acyl group from acyl-phosphate (acyl-PO(4)) to glycerol-3-phosphate (G3P) to form lysophosphatidic acid (LPA). This enzyme utilizes acyl-phosphate as fatty acyl donor, but not acyl-CoA or acyl-ACP. This is Glycerol-3-phosphate acyltransferase from Acholeplasma laidlawii.